The chain runs to 220 residues: Deoxyribose-phosphate aldolase (220 aa).

The active-site Proton donor/acceptor is the D89. K151 functions as the Schiff-base intermediate with acetaldehyde in the catalytic mechanism. K180 acts as the Proton donor/acceptor in catalysis.

It belongs to the DeoC/FbaB aldolase family. DeoC type 1 subfamily.

The protein resides in the cytoplasm. The catalysed reaction is 2-deoxy-D-ribose 5-phosphate = D-glyceraldehyde 3-phosphate + acetaldehyde. It participates in carbohydrate degradation; 2-deoxy-D-ribose 1-phosphate degradation; D-glyceraldehyde 3-phosphate and acetaldehyde from 2-deoxy-alpha-D-ribose 1-phosphate: step 2/2. Its function is as follows. Catalyzes a reversible aldol reaction between acetaldehyde and D-glyceraldehyde 3-phosphate to generate 2-deoxy-D-ribose 5-phosphate. This is Deoxyribose-phosphate aldolase from Bdellovibrio bacteriovorus (strain ATCC 15356 / DSM 50701 / NCIMB 9529 / HD100).